We begin with the raw amino-acid sequence, 119 residues long: Large ribosomal subunit protein uL22 (119 aa).

This sequence belongs to the universal ribosomal protein uL22 family. As to quaternary structure, part of the 50S ribosomal subunit.

Functionally, this protein binds specifically to 23S rRNA; its binding is stimulated by other ribosomal proteins, e.g. L4, L17, and L20. It is important during the early stages of 50S assembly. It makes multiple contacts with different domains of the 23S rRNA in the assembled 50S subunit and ribosome. In terms of biological role, the globular domain of the protein is located near the polypeptide exit tunnel on the outside of the subunit, while an extended beta-hairpin is found that lines the wall of the exit tunnel in the center of the 70S ribosome. This chain is Large ribosomal subunit protein uL22, found in Chlorobium phaeobacteroides (strain DSM 266 / SMG 266 / 2430).